The chain runs to 277 residues: Cation-dependent mannose-6-phosphate receptor (277 aa).

The N-terminal stretch at 1-26 is a signal peptide; it reads MFPFYSCWRTGLLLLLLAVAVRESWQ. Residues 27-185 lie on the Lumenal side of the membrane; that stretch reads TEEKTCDLVG…SLACSPEISH (159 aa). Residues 30–181 form the MRH domain; the sequence is KTCDLVGEKG…EMDSSLACSP (152 aa). Cysteine 32 and cysteine 78 are oxidised to a cystine. 5 N-linked (GlcNAc...) asparagine glycosylation sites follow: asparagine 57, asparagine 83, asparagine 94, asparagine 107, and asparagine 113. Disulfide bonds link cysteine 132–cysteine 167 and cysteine 145–cysteine 179. The helical transmembrane segment at 186-210 threads the bilayer; it reads LSVGSILLVTFASLVAVYVVGGFLY. Topologically, residues 211-277 are cytoplasmic; that stretch reads QRLVVGAKGM…EERDDHLLPM (67 aa). The segment at 256–277 is disordered; that stretch reads RGVGDDQLGEESEERDDHLLPM. Residue serine 267 is modified to Phosphoserine.

In terms of assembly, homodimer. Binds GGA1, GGA2 and GGA3.

The protein localises to the lysosome membrane. Its function is as follows. Transport of phosphorylated lysosomal enzymes from the Golgi complex and the cell surface to lysosomes. Lysosomal enzymes bearing phosphomannosyl residues bind specifically to mannose-6-phosphate receptors in the Golgi apparatus and the resulting receptor-ligand complex is transported to an acidic prelyosomal compartment where the low pH mediates the dissociation of the complex. The protein is Cation-dependent mannose-6-phosphate receptor (M6PR) of Homo sapiens (Human).